Consider the following 398-residue polypeptide: Succinate--CoA ligase [ADP-forming] subunit beta (398 aa).

In terms of domain architecture, ATP-grasp spans 9–254 (KRLLHEYGAP…TSEEDPKEIE (246 aa)). ATP is bound by residues lysine 46, 53 to 55 (GRG), glutamate 109, alanine 112, and glutamate 117. The Mg(2+) site is built by asparagine 209 and aspartate 223. Substrate contacts are provided by residues asparagine 274 and 331–333 (GIM).

Belongs to the succinate/malate CoA ligase beta subunit family. Heterotetramer of two alpha and two beta subunits. Mg(2+) is required as a cofactor.

The enzyme catalyses succinate + ATP + CoA = succinyl-CoA + ADP + phosphate. It catalyses the reaction GTP + succinate + CoA = succinyl-CoA + GDP + phosphate. It functions in the pathway carbohydrate metabolism; tricarboxylic acid cycle; succinate from succinyl-CoA (ligase route): step 1/1. Succinyl-CoA synthetase functions in the citric acid cycle (TCA), coupling the hydrolysis of succinyl-CoA to the synthesis of either ATP or GTP and thus represents the only step of substrate-level phosphorylation in the TCA. The beta subunit provides nucleotide specificity of the enzyme and binds the substrate succinate, while the binding sites for coenzyme A and phosphate are found in the alpha subunit. This chain is Succinate--CoA ligase [ADP-forming] subunit beta, found in Bartonella henselae (strain ATCC 49882 / DSM 28221 / CCUG 30454 / Houston 1) (Rochalimaea henselae).